Here is a 51-residue protein sequence, read N- to C-terminus: uncharacterized protein (51 aa).

A coiled-coil region spans residues 3 to 30 (EEKAVSLAKEIIELDIKRDEMLETFMQL).

This is an uncharacterized protein from Bacillus subtilis (strain 168).